Here is a 664-residue protein sequence, read N- to C-terminus: Exoribonuclease 2 (664 aa).

The RNB domain occupies 193–521; that stretch reads RIDMTHIPFV…INHRMLKALI (329 aa). The region spanning 568–650 is the S1 motif domain; that stretch reads QTLFTGEIFD…ENRSLVAKPT (83 aa).

It belongs to the RNR ribonuclease family. RNase II subfamily.

It localises to the cytoplasm. It carries out the reaction Exonucleolytic cleavage in the 3'- to 5'-direction to yield nucleoside 5'-phosphates.. Involved in mRNA degradation. Hydrolyzes single-stranded polyribonucleotides processively in the 3' to 5' direction. The chain is Exoribonuclease 2 from Vibrio vulnificus (strain YJ016).